Consider the following 146-residue polypeptide: Hemoglobin subunit beta-1 (146 aa).

Positions 2–146 (HWTAEEKQLI…VAHALARRYH (145 aa)) constitute a Globin domain. The heme b site is built by H63 and H92.

It belongs to the globin family. In terms of assembly, heterotetramer of two alpha chains and two beta chains. As to expression, red blood cells.

Functionally, involved in oxygen transport from the lung to the various peripheral tissues. The protein is Hemoglobin subunit beta-1 (HBB1) of Iguana iguana (Common iguana).